Consider the following 551-residue polypeptide: Pentatricopeptide repeat-containing protein At3g13150 (551 aa).

The tract at residues 22–67 (ATAKSAKPRSQTKSTKFPSKLKASTASVGDGGQSSNDAKDSKNSKL) is disordered. Polar residues predominate over residues 29 to 48 (PRSQTKSTKFPSKLKASTAS). Basic and acidic residues predominate over residues 58-67 (DAKDSKNSKL). PPR repeat units lie at residues 121–155 (SEDF…NCER), 156–191 (TVKS…GITP), 192–226 (DLVT…GFEP), 227–261 (DLIS…NLSP), 262–296 (NIRS…GISP), 297–331 (DVHT…GLTP), and 332–366 (DTVT…KLLS). 2 disordered regions span residues 409–435 (GKKK…SPDT) and 449–551 (SSSD…LLDD). The span at 415–435 (SSPVSSSAKTTSTPVSSSPDT) shows a compositional bias: low complexity.

This sequence belongs to the PPR family. P subfamily.

The protein is Pentatricopeptide repeat-containing protein At3g13150 of Arabidopsis thaliana (Mouse-ear cress).